The following is a 404-amino-acid chain: SAC3 domain-containing protein 1 (404 aa).

2 disordered regions span residues 1-58 (MAGR…GTCP) and 77-117 (RLEV…QLRP). Positions 12–21 (PPRPAAPHPR) are enriched in pro residues. Over residues 87 to 101 (DPPRADPQRAVKEYS) the composition is skewed to basic and acidic residues. Residues 203–379 (QVQEGFGSLR…TCKVLVESKL (177 aa)) form the PCI domain. Position 402 is a phosphoserine (serine 402).

It belongs to the SAC3 family. As to quaternary structure, may be part of a SEM1-containing complex.

The protein resides in the cytoplasm. It is found in the cytoskeleton. It localises to the microtubule organizing center. Its subcellular location is the centrosome. The protein localises to the spindle. In terms of biological role, involved in centrosome duplication and mitotic progression. The chain is SAC3 domain-containing protein 1 (SAC3D1) from Homo sapiens (Human).